The primary structure comprises 522 residues: Zinc finger protein 892 (522 aa).

Disordered regions lie at residues 1–22 and 96–124; these read MEPEGRGSLFEDSDLLHAGNPK and AASQKHWETIPESKELTPEKDISEEESAP. Residues 100–116 show a composition bias toward basic and acidic residues; sequence KHWETIPESKELTPEKD. 10 C2H2-type zinc fingers span residues 221 to 243, 249 to 271, 277 to 299, 305 to 327, 333 to 355, 361 to 383, 389 to 411, 417 to 439, 445 to 467, and 473 to 495; these read WKCNECEKAFSYYSAFVLHQRIH, YECNECGKAFSQSIHLTLHQRIH, YECHECGKAFSHRSALIRHHIIH, YECNECGKAFNQSSYLTQHQRIH, YECNECGKAFSQSTFLTQHQVIH, YKCNECGKAFSDRSGLIQHQRTH, YECNECGKAFGYCSALTQHQRTH, YKCNDCAKAFSDRSALIRHQRTH, YKCKDCGKAFSQSSSLTKHQKTH, and YKCKECGKAFSQSSSLSQHQKTH.

The protein belongs to the krueppel C2H2-type zinc-finger protein family.

It is found in the nucleus. Functionally, may be involved in transcriptional regulation. This Homo sapiens (Human) protein is Zinc finger protein 892.